Reading from the N-terminus, the 173-residue chain is Crossover junction endodeoxyribonuclease RuvC (173 aa).

Active-site residues include Asp-8, Glu-68, and Asp-140. Residues Asp-8, Glu-68, and Asp-140 each contribute to the Mg(2+) site.

This sequence belongs to the RuvC family. Homodimer which binds Holliday junction (HJ) DNA. The HJ becomes 2-fold symmetrical on binding to RuvC with unstacked arms; it has a different conformation from HJ DNA in complex with RuvA. In the full resolvosome a probable DNA-RuvA(4)-RuvB(12)-RuvC(2) complex forms which resolves the HJ. It depends on Mg(2+) as a cofactor.

Its subcellular location is the cytoplasm. The catalysed reaction is Endonucleolytic cleavage at a junction such as a reciprocal single-stranded crossover between two homologous DNA duplexes (Holliday junction).. Functionally, the RuvA-RuvB-RuvC complex processes Holliday junction (HJ) DNA during genetic recombination and DNA repair. Endonuclease that resolves HJ intermediates. Cleaves cruciform DNA by making single-stranded nicks across the HJ at symmetrical positions within the homologous arms, yielding a 5'-phosphate and a 3'-hydroxyl group; requires a central core of homology in the junction. The consensus cleavage sequence is 5'-(A/T)TT(C/G)-3'. Cleavage occurs on the 3'-side of the TT dinucleotide at the point of strand exchange. HJ branch migration catalyzed by RuvA-RuvB allows RuvC to scan DNA until it finds its consensus sequence, where it cleaves and resolves the cruciform DNA. The sequence is that of Crossover junction endodeoxyribonuclease RuvC from Saccharophagus degradans (strain 2-40 / ATCC 43961 / DSM 17024).